Reading from the N-terminus, the 242-residue chain is MKITNLVDKKLASDYVAIELLKLIKDKPDAILGLATGGTMTDVYPRFSELLSANHVDLANVQTFNLDEYVGLEPEHAQSYHTYMHQLLFDHNASWNADNIHIPQGHVDDLEREARRYENQLKQIGQPDIQLLGIGENGHIGFNEPGTSFESETRVVDLTESTINANSVHFDHIDDVPKQAVSMGLNSIMRAKRIILLAFGERKRDAIHQLLNGETNESLPASILHQHPNVEIIVDDTIFNRL.

Residue Asp67 is the Proton acceptor; for enolization step of the active site. Asn137 functions as the For ring-opening step in the catalytic mechanism. The active-site Proton acceptor; for ring-opening step is His139. Glu144 acts as the For ring-opening step in catalysis.

This sequence belongs to the glucosamine/galactosamine-6-phosphate isomerase family. NagB subfamily.

The enzyme catalyses alpha-D-glucosamine 6-phosphate + H2O = beta-D-fructose 6-phosphate + NH4(+). It functions in the pathway amino-sugar metabolism; N-acetylneuraminate degradation; D-fructose 6-phosphate from N-acetylneuraminate: step 5/5. Its function is as follows. Catalyzes the reversible isomerization-deamination of glucosamine 6-phosphate (GlcN6P) to form fructose 6-phosphate (Fru6P) and ammonium ion. The chain is Glucosamine-6-phosphate deaminase from Staphylococcus haemolyticus (strain JCSC1435).